The sequence spans 477 residues: ATP-dependent rRNA helicase RRP3 (477 aa).

The interval 1–22 (MSVKVDGMINKKSKTHSKKLDA) is disordered. The Q motif motif lies at 65–93 (KSFNELKLIPELLEAIQQMKFTKPTPIQS). The Helicase ATP-binding domain occupies 96–267 (IPHALEGKDI…RASLHNPVRV (172 aa)). Residue 109 to 116 (AQTGSGKT) participates in ATP binding. A DEAD box motif is present at residues 215–218 (DEAD). The Helicase C-terminal domain occupies 294 to 438 (YLIHLLNEFL…KDPSPSKAVL (145 aa)). The tract at residues 452-477 (AIRQTKDFHEKRNPKKNRDDRDREER) is disordered.

Belongs to the DEAD box helicase family. DDX47/RRP3 subfamily. As to quaternary structure, interacts with the SSU processome.

The protein localises to the nucleus. It carries out the reaction ATP + H2O = ADP + phosphate + H(+). In terms of biological role, ATP-dependent rRNA helicase required for pre-ribosomal RNA processing. Involved in the maturation of the 35S-pre-rRNA and to its cleavage to mature 18S rRNA. This chain is ATP-dependent rRNA helicase RRP3, found in Debaryomyces hansenii (strain ATCC 36239 / CBS 767 / BCRC 21394 / JCM 1990 / NBRC 0083 / IGC 2968) (Yeast).